A 528-amino-acid polypeptide reads, in one-letter code: Autophagy-related protein 22 (528 aa).

Over 1–98 (MSYGTINDMN…IFVDTSSFAL (98 aa)) the chain is Cytoplasmic. A helical transmembrane segment spans residues 99 to 119 (YVFSLSVLFQTIIVISVSGIV). The Vacuolar segment spans residues 120 to 130 (DLWGSVKFKGR). The helical transmembrane segment at 131-151 (ILVWFGIVGALSTVAISKLND) threads the bilayer. At 152 to 153 (TQ) the chain is on the cytoplasmic side. A helical transmembrane segment spans residues 154 to 174 (IYSLAGLYIVANGCFGVINVV). The Vacuolar segment spans residues 175-210 (GNSLLPIFVKDSLKCQSQGAYEPDKVDSLTTVISGR). A helical membrane pass occupies residues 211–231 (GASLGYSSALIVQIVSMFLVA). Residues 232–241 (SKKGSKQDVQ) lie on the Cytoplasmic side of the membrane. The chain crosses the membrane as a helical span at residues 242 to 262 (VAVLFVGIWWFVWQLPMIWLI). Residues 263–318 (DDVTIPIRVDDSTLASARSPYPGEQDALGQLNWKNYLSYGWVSLFESFKHARLLKD) are Vacuolar-facing. Ser278 carries the phosphoserine modification. The helical transmembrane segment at 319–339 (VMIFLIAWFIISDSITTINST) threads the bilayer. Over 340-352 (AVLFSKAELHMST) the chain is Cytoplasmic. The chain crosses the membrane as a helical span at residues 353 to 373 (LNLIMISVLTVVNAMLGAFMI). Topologically, residues 374–388 (PQFLATKFRWTSSQT) are vacuolar. The chain crosses the membrane as a helical span at residues 389–409 (LMYIIIWASFIPFYGILGFFF). Residues 410 to 417 (NAFGLKHK) lie on the Cytoplasmic side of the membrane. A helical membrane pass occupies residues 418–438 (FEMFLLAIWYGLSLGGLSAVS). At 439–485 (RSVFSLIVPPGKESTFFSMFSITDKGSSILGPFLVGLLTDKTHNIRY) the chain is on the vacuolar side. The chain crosses the membrane as a helical span at residues 486 to 506 (SFYFFFLLLMLSLPVLNCLDV). At 507–528 (KRGRREAEELSQVLPESERRLD) the chain is on the cytoplasmic side.

The protein belongs to the ATG22 family.

The protein resides in the vacuole membrane. In terms of biological role, vacuolar effluxer which mediate the efflux of leucine and other amino acids resulting from autophagic degradation. The release of autophagic amino acids allows the maintenance of protein synthesis and viability during nitrogen starvation. This is Autophagy-related protein 22 (ATG22) from Saccharomyces cerevisiae (strain ATCC 204508 / S288c) (Baker's yeast).